A 104-amino-acid chain; its full sequence is Large ribosomal subunit protein uL24 (104 aa).

The protein belongs to the universal ribosomal protein uL24 family. As to quaternary structure, part of the 50S ribosomal subunit.

One of two assembly initiator proteins, it binds directly to the 5'-end of the 23S rRNA, where it nucleates assembly of the 50S subunit. Its function is as follows. One of the proteins that surrounds the polypeptide exit tunnel on the outside of the subunit. The chain is Large ribosomal subunit protein uL24 from Dichelobacter nodosus (strain VCS1703A).